Here is a 1232-residue protein sequence, read N- to C-terminus: DNA-directed RNA polymerase subunit beta (1232 aa).

Residues S1170 to H1232 are disordered. Positions V1171–V1180 are enriched in acidic residues. Residues P1189–E1198 are compositionally biased toward basic and acidic residues. A compositionally biased stretch (acidic residues) spans D1199 to H1232.

This sequence belongs to the RNA polymerase beta chain family. As to quaternary structure, the RNAP catalytic core consists of 2 alpha, 1 beta, 1 beta' and 1 omega subunit. When a sigma factor is associated with the core the holoenzyme is formed, which can initiate transcription.

It catalyses the reaction RNA(n) + a ribonucleoside 5'-triphosphate = RNA(n+1) + diphosphate. DNA-dependent RNA polymerase catalyzes the transcription of DNA into RNA using the four ribonucleoside triphosphates as substrates. In Clostridium botulinum (strain Okra / Type B1), this protein is DNA-directed RNA polymerase subunit beta.